The chain runs to 91 residues: Small ribosomal subunit protein bS18 (91 aa).

This sequence belongs to the bacterial ribosomal protein bS18 family. In terms of assembly, part of the 30S ribosomal subunit. Forms a tight heterodimer with protein bS6.

Functionally, binds as a heterodimer with protein bS6 to the central domain of the 16S rRNA, where it helps stabilize the platform of the 30S subunit. The protein is Small ribosomal subunit protein bS18 of Burkholderia lata (strain ATCC 17760 / DSM 23089 / LMG 22485 / NCIMB 9086 / R18194 / 383).